Here is a 193-residue protein sequence, read N- to C-terminus: ATP-dependent Clp protease proteolytic subunit 1 (193 aa).

Catalysis depends on S98, which acts as the Nucleophile. Residue H123 is part of the active site.

It belongs to the peptidase S14 family. As to quaternary structure, fourteen ClpP subunits assemble into 2 heptameric rings which stack back to back to give a disk-like structure with a central cavity, resembling the structure of eukaryotic proteasomes.

It localises to the cytoplasm. It catalyses the reaction Hydrolysis of proteins to small peptides in the presence of ATP and magnesium. alpha-casein is the usual test substrate. In the absence of ATP, only oligopeptides shorter than five residues are hydrolyzed (such as succinyl-Leu-Tyr-|-NHMec, and Leu-Tyr-Leu-|-Tyr-Trp, in which cleavage of the -Tyr-|-Leu- and -Tyr-|-Trp bonds also occurs).. Cleaves peptides in various proteins in a process that requires ATP hydrolysis. Has a chymotrypsin-like activity. Plays a major role in the degradation of misfolded proteins. This chain is ATP-dependent Clp protease proteolytic subunit 1, found in Bacillus anthracis.